Consider the following 169-residue polypeptide: NADH-quinone oxidoreductase subunit I (169 aa).

2 consecutive 4Fe-4S ferredoxin-type domains span residues 61–90 (RKYK…IEAQ) and 100–129 (VRYD…EGPN). 8 residues coordinate [4Fe-4S] cluster: C70, C73, C76, C80, C109, C112, C115, and C119.

Belongs to the complex I 23 kDa subunit family. In terms of assembly, NDH-1 is composed of 14 different subunits. Subunits NuoA, H, J, K, L, M, N constitute the membrane sector of the complex. It depends on [4Fe-4S] cluster as a cofactor.

It localises to the cell inner membrane. The enzyme catalyses a quinone + NADH + 5 H(+)(in) = a quinol + NAD(+) + 4 H(+)(out). NDH-1 shuttles electrons from NADH, via FMN and iron-sulfur (Fe-S) centers, to quinones in the respiratory chain. The immediate electron acceptor for the enzyme in this species is believed to be ubiquinone. Couples the redox reaction to proton translocation (for every two electrons transferred, four hydrogen ions are translocated across the cytoplasmic membrane), and thus conserves the redox energy in a proton gradient. The sequence is that of NADH-quinone oxidoreductase subunit I from Ehrlichia chaffeensis (strain ATCC CRL-10679 / Arkansas).